We begin with the raw amino-acid sequence, 130 residues long: Riboflavin kinase (130 aa).

10 to 15 is a CDP binding site; that stretch reads GFGEGK. Mg(2+) contacts are provided by Thr39 and Asn41. FMN is bound by residues Thr96 and Glu104. 109–112 contributes to the CDP binding site; sequence VNLR.

It belongs to the archaeal riboflavin kinase family. Mg(2+) serves as cofactor.

It carries out the reaction riboflavin + CTP = CDP + FMN + H(+). It participates in cofactor biosynthesis; FMN biosynthesis; FMN from riboflavin (CTP route): step 1/1. In terms of biological role, catalyzes the CTP-dependent phosphorylation of riboflavin (vitamin B2) to form flavin mononucleotide (FMN). In Methanococcus vannielii (strain ATCC 35089 / DSM 1224 / JCM 13029 / OCM 148 / SB), this protein is Riboflavin kinase.